Reading from the N-terminus, the 126-residue chain is Large ribosomal subunit protein bL19 (126 aa).

It belongs to the bacterial ribosomal protein bL19 family.

Its function is as follows. This protein is located at the 30S-50S ribosomal subunit interface and may play a role in the structure and function of the aminoacyl-tRNA binding site. This Dechloromonas aromatica (strain RCB) protein is Large ribosomal subunit protein bL19.